We begin with the raw amino-acid sequence, 765 residues long: DNA topoisomerase 1 (765 aa).

A compositionally biased stretch (basic and acidic residues) spans 1 to 23 (MSGDHLHNDSQIEADFRLNDSHK). A disordered region spans residues 1–199 (MSGDHLHNDS…NKKKKPKKEE (199 aa)). Position 2 is an N-acetylserine (serine 2). Residues serine 2 and serine 10 each carry the phosphoserine modification. Positions 24 to 39 (HKDKHKDREHRHKEHK) are enriched in basic residues. Positions 40–108 (KEKDREKSKH…DAKIKKEKEN (69 aa)) are enriched in basic and acidic residues. The residue at position 57 (serine 57) is a Phosphoserine. Residue lysine 101 forms a Glycyl lysine isopeptide (Lys-Gly) (interchain with G-Cter in SUMO2) linkage. Lysine 103 is covalently cross-linked (Glycyl lysine isopeptide (Lys-Gly) (interchain with G-Cter in SUMO); alternate). Lysine 103 participates in a covalent cross-link: Glycyl lysine isopeptide (Lys-Gly) (interchain with G-Cter in SUMO2); alternate. Phosphoserine is present on serine 112. Residue lysine 117 forms a Glycyl lysine isopeptide (Lys-Gly) (interchain with G-Cter in SUMO); alternate linkage. Lysine 117 participates in a covalent cross-link: Glycyl lysine isopeptide (Lys-Gly) (interchain with G-Cter in SUMO2); alternate. A Glycyl lysine isopeptide (Lys-Gly) (interchain with G-Cter in SUMO1); alternate cross-link involves residue lysine 117. A compositionally biased stretch (basic and acidic residues) spans 129–166 (PKEDIKPLKRPRDEDDADYKPKKIKTEDTKKEKKRKLE). Residues lysine 134 and lysine 148 each participate in a glycyl lysine isopeptide (Lys-Gly) (interchain with G-Cter in SUMO2) cross-link. Lysine 153 participates in a covalent cross-link: Glycyl lysine isopeptide (Lys-Gly) (interchain with G-Cter in SUMO); alternate. Lysine 153 is covalently cross-linked (Glycyl lysine isopeptide (Lys-Gly) (interchain with G-Cter in SUMO2); alternate). Residues lysine 158 and lysine 164 each participate in a glycyl lysine isopeptide (Lys-Gly) (interchain with G-Cter in SUMO2) cross-link. Lysine 172 participates in a covalent cross-link: Glycyl lysine isopeptide (Lys-Gly) (interchain with G-Cter in SUMO2); alternate. Lysine 172 carries the N6-acetyllysine; alternate modification. Residues 179 to 199 (KDKDKKVPEPDNKKKKPKKEE) are compositionally biased toward basic and acidic residues. Lysine 204 participates in a covalent cross-link: Glycyl lysine isopeptide (Lys-Gly) (interchain with G-Cter in SUMO2). Lysine 280 is subject to N6-acetyllysine. Residue lysine 336 forms a Glycyl lysine isopeptide (Lys-Gly) (interchain with G-Cter in SUMO2) linkage. Interaction with DNA regions lie at residues 425–426 (KY) and 488–493 (RAGNEK). One can recognise a Topo IB-type catalytic domain in the interval 432–765 (SSRIKGEKDW…IDMADEDYEF (334 aa)). At serine 506 the chain carries Phosphoserine; by CK2. Lysine 549 participates in a covalent cross-link: Glycyl lysine isopeptide (Lys-Gly) (interchain with G-Cter in SUMO2). The interval 585–587 (TAK) is interaction with DNA. Residues lysine 642, lysine 700, and lysine 712 each participate in a glycyl lysine isopeptide (Lys-Gly) (interchain with G-Cter in SUMO2) cross-link. Tyrosine 723 functions as the O-(3'-phospho-DNA)-tyrosine intermediate in the catalytic mechanism.

The protein belongs to the type IB topoisomerase family. Monomer. Interacts with ERCC6. Interacts with TPRN; TPRN interacts with a number of DNA damage response proteins, is recruited to sites of DNA damage and may play a role in DNA damage repair. As to quaternary structure, (Microbial infection) Interacts with SV40 Large T antigen; this interactions allows viral DNA replication. Post-translationally, sumoylated. Lys-117 is the main site of sumoylation. Sumoylation plays a role in partitioning TOP1 between nucleoli and nucleoplasm. Levels are dramatically increased on camptothecin (CPT) treatment. In terms of processing, phosphorylation at Ser-506 by CK2 increases binding to supercoiled DNA and sensitivity to camptothecin. As to expression, endothelial cells.

The protein resides in the nucleus. Its subcellular location is the nucleolus. It is found in the nucleoplasm. It catalyses the reaction ATP-independent breakage of single-stranded DNA, followed by passage and rejoining.. With respect to regulation, specifically inhibited by camptothecin (CPT), a plant alkaloid with antitumor activity. In terms of biological role, releases the supercoiling and torsional tension of DNA introduced during the DNA replication and transcription by transiently cleaving and rejoining one strand of the DNA duplex. Introduces a single-strand break via transesterification at a target site in duplex DNA. The scissile phosphodiester is attacked by the catalytic tyrosine of the enzyme, resulting in the formation of a DNA-(3'-phosphotyrosyl)-enzyme intermediate and the expulsion of a 5'-OH DNA strand. The free DNA strand then rotates around the intact phosphodiester bond on the opposing strand, thus removing DNA supercoils. Finally, in the religation step, the DNA 5'-OH attacks the covalent intermediate to expel the active-site tyrosine and restore the DNA phosphodiester backbone. Regulates the alternative splicing of tissue factor (F3) pre-mRNA in endothelial cells. Involved in the circadian transcription of the core circadian clock component BMAL1 by altering the chromatin structure around the ROR response elements (ROREs) on the BMAL1 promoter. This is DNA topoisomerase 1 (TOP1) from Homo sapiens (Human).